The sequence spans 134 residues: Ribonuclease VapC11 (134 aa).

A PINc domain is found at 2-126 (ILIDTSAWVE…ADFDVIARIT (125 aa)). The Mg(2+) site is built by Asp5 and Asp98.

Belongs to the PINc/VapC protein family. Mg(2+) is required as a cofactor.

In terms of biological role, toxic component of a type II toxin-antitoxin (TA) system. Acts as an RNase. Its toxic effects on cell growth and colony formation are neutralized by coexpression with cognate antitoxin VapB11. The chain is Ribonuclease VapC11 from Mycobacterium tuberculosis (strain CDC 1551 / Oshkosh).